We begin with the raw amino-acid sequence, 455 residues long: tRNA modification GTPase MnmE (455 aa).

The (6S)-5-formyl-5,6,7,8-tetrahydrofolate site is built by arginine 26, glutamate 86, and arginine 125. A TrmE-type G domain is found at 222–376 (GLKTAIIGRP…VEEKINQIFF (155 aa)). Asparagine 232 is a K(+) binding site. Residues 232 to 237 (NVGKSS), 251 to 257 (TDIAGTT), and 276 to 279 (DTAG) contribute to the GTP site. Mg(2+) is bound at residue serine 236. K(+) is bound by residues threonine 251, isoleucine 253, and threonine 256. Threonine 257 contacts Mg(2+). A (6S)-5-formyl-5,6,7,8-tetrahydrofolate-binding site is contributed by lysine 455.

It belongs to the TRAFAC class TrmE-Era-EngA-EngB-Septin-like GTPase superfamily. TrmE GTPase family. Homodimer. Heterotetramer of two MnmE and two MnmG subunits. K(+) is required as a cofactor.

It is found in the cytoplasm. In terms of biological role, exhibits a very high intrinsic GTPase hydrolysis rate. Involved in the addition of a carboxymethylaminomethyl (cmnm) group at the wobble position (U34) of certain tRNAs, forming tRNA-cmnm(5)s(2)U34. This chain is tRNA modification GTPase MnmE, found in Lactococcus lactis subsp. cremoris (strain MG1363).